Here is a 497-residue protein sequence, read N- to C-terminus: MAATQKSLCAIPADPIEFPADANTLDYARSEDAKCPIRHMREHFIFPTRASLKKKALDGRLPAYPPNHAKPGETATAQNGTSNTNDDNVTPAVYFCGNSLGLQPKATRDHINAQLETWASIGVHGHFTSWDNSPLKSWQDMAADCAAQSASVVGASPDEIAIMNTLTANLHFMMASFYRPTEKRHKIISEWKPFPSDTYAIASQIQWHGFDTATSLVELHPDENYYISTEKILATIDEHAESTALLLLPGIQYWSGQLFDMPLITAHARAKGIVVGWDLAHAVGNVPLSLHDWDVDFAIWCTYKYLNAGPGAIAGAFVHERHGKVDSDGFKLRLSGWYGNNKATRFNMAKDFDPTPGAQGWVVSNPSGIDLASLGAALSVYNLTTPADLRKKSLWLTAYAEHLLNGILKDEAASSAGDGKKPAFRIITPSNKNERGAQLSVLLREGLLDVVGEKMEAAGVVCDRRKPDVMRVAPVPMYNSYEDVWRCVDALRKAVMS.

The disordered stretch occupies residues 59–86 (GRLPAYPPNHAKPGETATAQNGTSNTND). Over residues 75 to 86 (ATAQNGTSNTND) the composition is skewed to polar residues. Residues L166, T167, 194–197 (FPSD), D278, H281, and Y303 contribute to the pyridoxal 5'-phosphate site. K304 bears the N6-(pyridoxal phosphate)lysine mark. Positions 337 and 365 each coordinate pyridoxal 5'-phosphate.

The protein belongs to the kynureninase family. Homodimer. It depends on pyridoxal 5'-phosphate as a cofactor.

It localises to the cytoplasm. The catalysed reaction is L-kynurenine + H2O = anthranilate + L-alanine + H(+). The enzyme catalyses 3-hydroxy-L-kynurenine + H2O = 3-hydroxyanthranilate + L-alanine + H(+). It participates in amino-acid degradation; L-kynurenine degradation; L-alanine and anthranilate from L-kynurenine: step 1/1. The protein operates within cofactor biosynthesis; NAD(+) biosynthesis; quinolinate from L-kynurenine: step 2/3. In terms of biological role, catalyzes the cleavage of L-kynurenine (L-Kyn) and L-3-hydroxykynurenine (L-3OHKyn) into anthranilic acid (AA) and 3-hydroxyanthranilic acid (3-OHAA), respectively. This chain is Kynureninase, found in Pyricularia oryzae (strain 70-15 / ATCC MYA-4617 / FGSC 8958) (Rice blast fungus).